Here is a 285-residue protein sequence, read N- to C-terminus: Probable endonuclease 4 (285 aa).

Zn(2+) is bound by residues His-69, His-109, Glu-145, Asp-179, His-182, His-216, Asp-229, His-231, and Glu-261.

Belongs to the AP endonuclease 2 family. Zn(2+) serves as cofactor.

It catalyses the reaction Endonucleolytic cleavage to 5'-phosphooligonucleotide end-products.. In terms of biological role, endonuclease IV plays a role in DNA repair. It cleaves phosphodiester bonds at apurinic or apyrimidinic (AP) sites, generating a 3'-hydroxyl group and a 5'-terminal sugar phosphate. This Salmonella heidelberg (strain SL476) protein is Probable endonuclease 4.